Consider the following 1333-residue polypeptide: Aldehyde oxidase 1 (1333 aa).

A 2Fe-2S ferredoxin-type domain is found at 4-91 (PQLLFYVNGQ…GTAVTTVEGI (88 aa)). Positions 43, 48, 51, and 73 each coordinate [2Fe-2S] cluster. Residue Q112 participates in Mo-molybdopterin binding. [2Fe-2S] cluster is bound by residues C113, C116, C148, and C150. C150 is a binding site for Mo-molybdopterin. An FAD-binding PCMH-type domain is found at 235–420 (FYSNRMTWIS…VSVNIPCSRK (186 aa)). Residues 263 to 270 (IVMGYTSV), A344, S353, H357, D366, and L410 contribute to the FAD site. Residues 801–802 (AF) and M1042 each bind Mo-molybdopterin. Residue S1063 is modified to Phosphoserine. Mo-molybdopterin-binding positions include 1083 to 1086 (GSVV), Q1198, and L1263. E1265 acts as the Proton acceptor; for azaheterocycle hydroxylase activity in catalysis.

Belongs to the xanthine dehydrogenase family. In terms of assembly, homodimer. Requires [2Fe-2S] cluster as cofactor. FAD serves as cofactor. Mo-molybdopterin is required as a cofactor. Post-translationally, the N-terminus is blocked. In terms of tissue distribution, expression in liver (at protein level). Also detected in heart, lung, spleen and kidney.

Its subcellular location is the cytoplasm. The catalysed reaction is an aldehyde + O2 + H2O = a carboxylate + H2O2 + H(+). It carries out the reaction retinal + O2 + H2O = retinoate + H2O2 + H(+). Its activity is regulated as follows. Inhibited by menadione and isovanillin. Not inhibited by allopurinol, a xanthine dehydrogenase potent inhibitor. Inhibited by the flavonoids quercetin, myricetin and genistein. Nitric oxide generation is inhibited by raloxifene and competitively inhibited by an increase in oxygen levels. Functionally, oxidase with broad substrate specificity, oxidizing aromatic azaheterocycles, such as N1-methylnicotinamide, N-methylphthalazinium and phthalazine, as well as aldehydes, such as benzaldehyde, retinal, pyridoxal, and vanillin. Plays a role in the metabolism of xenobiotics and drugs containing aromatic azaheterocyclic substituents. Participates in the bioactivation of prodrugs such as famciclovir, catalyzing the oxidation step from 6-deoxypenciclovir to penciclovir, which is a potent antiviral agent. Is probably involved in the regulation of reactive oxygen species homeostasis. Is a prominent source of superoxide generation via the one-electron reduction of molecular oxygen. Also catalyzes nitric oxide (NO) production; under anaerobic conditions, reduces nitrite to NO with NADH or aldehyde as electron donor, but under aerobic conditions, NADH is the preferred substrate. These reactions may be catalyzed by several isozymes. May play a role in adipogenesis. This Rattus norvegicus (Rat) protein is Aldehyde oxidase 1.